We begin with the raw amino-acid sequence, 84 residues long: U21-theraphotoxin-Cg1a 3 (84 aa).

Positions 1–21 (MKVSVLITLAVLGVMFLLTSA) are cleaved as a signal peptide. Positions 22-47 (EERGSDQMDSPAWLKSMERIFQSEER) are excised as a propeptide. 3 disulfide bridges follow: C49–C63, C56–C68, and C62–C76. Residue V82 is modified to Valine amide.

This sequence belongs to the neurotoxin 10 (Hwtx-1) family. 05 (F4a) subfamily. Expressed by the venom gland.

The protein localises to the secreted. Its function is as follows. Probable ion channel inhibitor. This Chilobrachys guangxiensis (Chinese earth tiger tarantula) protein is U21-theraphotoxin-Cg1a 3.